The primary structure comprises 273 residues: Dermonecrotic toxin LsaSicTox-alphaIB1aii (273 aa).

His5 is a catalytic residue. Mg(2+)-binding residues include Glu25 and Asp27. His41 functions as the Nucleophile in the catalytic mechanism. 2 cysteine pairs are disulfide-bonded: Cys45–Cys51 and Cys47–Cys190. Asp85 provides a ligand contact to Mg(2+).

This sequence belongs to the arthropod phospholipase D family. Class II subfamily. Requires Mg(2+) as cofactor. Expressed by the venom gland.

It localises to the secreted. The enzyme catalyses an N-(acyl)-sphingosylphosphocholine = an N-(acyl)-sphingosyl-1,3-cyclic phosphate + choline. The catalysed reaction is an N-(acyl)-sphingosylphosphoethanolamine = an N-(acyl)-sphingosyl-1,3-cyclic phosphate + ethanolamine. It catalyses the reaction a 1-acyl-sn-glycero-3-phosphocholine = a 1-acyl-sn-glycero-2,3-cyclic phosphate + choline. It carries out the reaction a 1-acyl-sn-glycero-3-phosphoethanolamine = a 1-acyl-sn-glycero-2,3-cyclic phosphate + ethanolamine. Its function is as follows. Dermonecrotic toxins cleave the phosphodiester linkage between the phosphate and headgroup of certain phospholipids (sphingolipid and lysolipid substrates), forming an alcohol (often choline) and a cyclic phosphate. This toxin acts on sphingomyelin (SM). It may also act on ceramide phosphoethanolamine (CPE), lysophosphatidylcholine (LPC) and lysophosphatidylethanolamine (LPE), but not on lysophosphatidylserine (LPS), and lysophosphatidylglycerol (LPG). It acts by transphosphatidylation, releasing exclusively cyclic phosphate products as second products. Induces dermonecrosis, hemolysis, increased vascular permeability, edema, inflammatory response, and platelet aggregation. The chain is Dermonecrotic toxin LsaSicTox-alphaIB1aii from Loxosceles sabina (Tucson recluse spider).